A 240-amino-acid chain; its full sequence is Adenylate dimethylallyltransferase (240 aa).

Belongs to the isopentenyl transferase family.

It catalyses the reaction dimethylallyl diphosphate + AMP = N(6)-(dimethylallyl)adenosine 5'-phosphate + diphosphate. Its function is as follows. Transfers dimethylallyl groups to AMP as part of the biosynthesis of cytokinin phytohormones. This Agrobacterium vitis (Rhizobium vitis) protein is Adenylate dimethylallyltransferase (ipt).